Reading from the N-terminus, the 934-residue chain is Oxysterol-binding protein-related protein 6 (934 aa).

Residues 1–62 are disordered; sequence MSSDEKGISP…RQLLEPEPVP (62 aa). S2 carries the post-translational modification N-acetylserine. Residues 14–29 are compositionally biased toward low complexity; the sequence is TSTPTHRSASSSTSSQ. Residues 30-40 show a composition bias toward basic and acidic residues; it reads RDSRQSIHILE. S35 is modified (phosphoserine). Polar residues predominate over residues 42-53; it reads TASSSTEPSVSR. In terms of domain architecture, PH spans 86 to 181; sequence PDKHEGFMLK…WVSKLRHHRL (96 aa). 2 positions are modified to phosphoserine: S190 and S290.

This sequence belongs to the OSBP family. As to quaternary structure, homodimer. Interacts with OSBPL3. Expressed in brain and striated muscle (at protein level). Widely expressed. Expressed in skeletal muscle.

It is found in the cytoplasm. It localises to the cytosol. The protein resides in the endoplasmic reticulum membrane. The protein localises to the nucleus envelope. Its subcellular location is the cell membrane. It is found in the endosome membrane. Functionally, regulates cellular transport and efflux of cholesterol. Plays a role in phosphatidylinositol-4-phophate (PI4P) turnover at the neuronal membrane. Binds via its PH domain PI4P, phosphatidylinositol-4,5-diphosphate, phosphatidylinositol-3,4,5-triphosphate, and phosphatidic acid. Weakly binds 25-hydroxycholesterol. The chain is Oxysterol-binding protein-related protein 6 (OSBPL6) from Homo sapiens (Human).